We begin with the raw amino-acid sequence, 383 residues long: Putative gustatory receptor 22c (383 aa).

At 1-11 (MFASRSDLQSR) the chain is on the cytoplasmic side. A helical membrane pass occupies residues 12–32 (LCWIILKATLYSSWFLGVFPY). Topologically, residues 33 to 45 (RFDSRNGQLKRSR) are extracellular. The chain crosses the membrane as a helical span at residues 46–66 (FLLFYGLILNFFLLLKMVCSG). Topologically, residues 67–86 (GQKLGIPEAFARNSVLENTH) are cytoplasmic. A helical membrane pass occupies residues 87-107 (YTTGMLAVFSCVVIHFLNFWG). Residues 108 to 144 (STRVQDLANELLVLEYQQFASLNETKCPKFNSFVIQK) are Extracellular-facing. An N-linked (GlcNAc...) asparagine glycan is attached at Asn130. The chain crosses the membrane as a helical span at residues 145-165 (WLSVIGLLLSYLSIAYGLPGN). Residues 166–250 (NFSVEMVLIN…YMVATYEYHM (85 aa)) lie on the Cytoplasmic side of the membrane. The chain crosses the membrane as a helical span at residues 251–271 (TLVLTTGLASNFLAIYSWIVL). Residues 272 to 279 (DISMNINF) lie on the Extracellular side of the membrane. The chain crosses the membrane as a helical span at residues 280–300 (IYLLIFPLFLLVNVWNLWLSI). The Cytoplasmic portion of the chain corresponds to 301–360 (AASDLAENAGKSTQTVLKLFADLEVKDIELERSVNEFALLCGHCQFNFHVCGLFTINYKM). Residues 361-381 (GFQMIITSFLYLIYMIQFDFM) traverse the membrane as a helical segment. At 382-383 (NL) the chain is on the extracellular side.

It belongs to the insect chemoreceptor superfamily. Gustatory receptor (GR) family. Gr22e subfamily. Taste bristles in the foreleg and labial palps.

It localises to the cell membrane. Probable gustatory receptor which mediates acceptance or avoidance behavior, depending on its substrates. The protein is Putative gustatory receptor 22c (Gr22c) of Drosophila melanogaster (Fruit fly).